A 160-amino-acid polypeptide reads, in one-letter code: Regulatory protein RecX (160 aa).

It belongs to the RecX family.

The protein localises to the cytoplasm. In terms of biological role, modulates RecA activity. The polypeptide is Regulatory protein RecX (Xanthomonas oryzae pv. oryzae (strain MAFF 311018)).